A 581-amino-acid polypeptide reads, in one-letter code: Aspartate--tRNA ligase (581 aa).

An L-aspartate-binding site is contributed by Glu170. Residues 194–197 (QLFK) form an aspartate region. An L-aspartate-binding site is contributed by Arg216. ATP-binding positions include 216-218 (RDE) and Gln225. Residue His439 coordinates L-aspartate. Glu468 is a binding site for ATP. L-aspartate is bound at residue Arg475. 520–523 (GFDR) contributes to the ATP binding site.

This sequence belongs to the class-II aminoacyl-tRNA synthetase family. Type 1 subfamily. As to quaternary structure, homodimer.

The protein resides in the cytoplasm. It catalyses the reaction tRNA(Asp) + L-aspartate + ATP = L-aspartyl-tRNA(Asp) + AMP + diphosphate. In terms of biological role, catalyzes the attachment of L-aspartate to tRNA(Asp) in a two-step reaction: L-aspartate is first activated by ATP to form Asp-AMP and then transferred to the acceptor end of tRNA(Asp). This chain is Aspartate--tRNA ligase, found in Thermosipho melanesiensis (strain DSM 12029 / CIP 104789 / BI429).